The primary structure comprises 2504 residues: Fatty acid synthase (2504 aa).

Met-1 bears the N-acetylmethionine mark. Residues 1–406 (MEEVVIAGMS…GSNVHVILQP (406 aa)) enclose the Ketosynthase family 3 (KS3) domain. Residue Lys-59 is modified to N6-acetyllysine. Ser-63 bears the Phosphoserine mark. At Lys-70 the chain carries N6-acetyllysine. Cys-161 serves as the catalytic For beta-ketoacyl synthase activity. A Phosphoserine modification is found at Ser-207. Catalysis depends on His-293, which acts as the For beta-ketoacyl synthase activity. Residue Lys-298 is modified to N6-acetyllysine. His-331 (for beta-ketoacyl synthase activity) is an active-site residue. Residues 429–817 (RTLEAVQDLL…INVNPNALFP (389 aa)) form an acyl and malonyl transferases region. Lys-528 carries the post-translational modification N6-acetyllysine. The active-site For malonyltransferase activity is the Ser-581. Residues 647–648 (DT) and Phe-671 contribute to the an acyl-CoA site. At Lys-673 the chain carries N6-acetyllysine. At Ser-725 the chain carries Phosphoserine. Arg-773 is a binding site for an acyl-CoA. Lys-790 carries the N6-acetyllysine modification. The tract at residues 844-967 (VPVAEDFPNG…VYLWEDPNSK (124 aa)) is N-terminal hotdog fold. One can recognise a PKS/mFAS DH domain in the interval 844 to 1104 (VPVAEDFPNG…ISRLQTTATS (261 aa)). The active-site Proton acceptor; for dehydratase activity is His-878. Positions 982–1104 (SVSRLTQGEV…ISRLQTTATS (123 aa)) are C-terminal hotdog fold. Lys-993 carries the post-translational modification N6-acetyllysine. The Proton donor; for dehydratase activity role is filled by Asp-1032. 2 positions are modified to N6-acetyllysine: Lys-1071 and Lys-1276. Cys-1464 carries the S-nitrosocysteine modification. Residues Ser-1577 and Ser-1587 each carry the phosphoserine modification. The interval 1628–1856 (DVPSSWTLEE…VQVREEEPEA (229 aa)) is enoyl reductase. Residue 1664-1681 (VLIHSGSGGVGQAAISIA) coordinates NADP(+). Position 1697 is an N6-(pyridoxal phosphate)lysine; alternate (Lys-1697). Lys-1697 is modified (N6-acetyllysine; alternate). Lys-1764 and Lys-1840 each carry N6-acetyllysine. A beta-ketoacyl reductase region spans residues 1857-2111 (VLPGAQPTLI…FVLAEKKAVA (255 aa)). 1879–1894 (SYIITGGLGGFGLELA) serves as a coordination point for NADP(+). Lys-1988 is modified (N6-acetyllysine). Residue Cys-2084 is modified to S-nitrosocysteine. Positions 2112 to 2192 (HGDGDTQRDL…EMSSKTDSAT (81 aa)) constitute a Carrier domain. An O-(pantetheine 4'-phosphoryl)serine; alternate modification is found at Ser-2150. Ser-2150 carries the phosphoserine; alternate modification. Residues 2181–2205 (LQEMSSKTDSATDTTAPKSRSDTSL) are disordered. The span at 2185–2198 (SSKTDSATDTTAPK) shows a compositional bias: low complexity. 2 positions are modified to phosphoserine: Ser-2190 and Ser-2229. Positions 2201–2504 (SDTSLKQNQL…AEPRVSVREG (304 aa)) are thioesterase. The active-site For thioesterase activity is the Ser-2301. Lys-2384 is subject to N6-acetyllysine. Lys-2442 is covalently cross-linked (Glycyl lysine isopeptide (Lys-Gly) (interchain with G-Cter in SUMO2)). The active-site For thioesterase activity is His-2474.

In terms of assembly, homodimer which is arranged in a head to tail fashion. Interacts with CEACAM1; this interaction is insulin and phosphorylation-dependent; reduces fatty-acid synthase activity. S-nitrosylation of Fatty acid synthase at cysteine residues Cys-1464 or Cys-2084 is important for the enzyme dimerization. In adipocytes, S-nitrosylation of Fatty acid synthase occurs under physiological conditions and gradually increases during adipogenesis.

It localises to the cytoplasm. The protein localises to the melanosome. The catalysed reaction is acetyl-CoA + n malonyl-CoA + 2n NADPH + 2n H(+) = a long-chain fatty acid + (n+1) CoA + n CO2 + 2n NADP(+).. The enzyme catalyses holo-[ACP] + acetyl-CoA = acetyl-[ACP] + CoA. It catalyses the reaction holo-[ACP] + malonyl-CoA = malonyl-[ACP] + CoA. It carries out the reaction a fatty acyl-[ACP] + malonyl-[ACP] + H(+) = a 3-oxoacyl-[ACP] + holo-[ACP] + CO2. The catalysed reaction is a (3R)-hydroxyacyl-[ACP] + NADP(+) = a 3-oxoacyl-[ACP] + NADPH + H(+). The enzyme catalyses a (3R)-hydroxyacyl-[ACP] = a (2E)-enoyl-[ACP] + H2O. It catalyses the reaction a 2,3-saturated acyl-[ACP] + NADP(+) = a (2E)-enoyl-[ACP] + NADPH + H(+). It carries out the reaction hexadecanoyl-[ACP] + H2O = hexadecanoate + holo-[ACP] + H(+). The catalysed reaction is acetyl-[ACP] + malonyl-[ACP] + H(+) = 3-oxobutanoyl-[ACP] + holo-[ACP] + CO2. The enzyme catalyses 3-oxobutanoyl-[ACP] + NADPH + H(+) = (3R)-hydroxybutanoyl-[ACP] + NADP(+). It catalyses the reaction (3R)-hydroxybutanoyl-[ACP] = (2E)-butenoyl-[ACP] + H2O. It carries out the reaction (2E)-butenoyl-[ACP] + NADPH + H(+) = butanoyl-[ACP] + NADP(+). The catalysed reaction is butanoyl-[ACP] + malonyl-[ACP] + H(+) = 3-oxohexanoyl-[ACP] + holo-[ACP] + CO2. The enzyme catalyses 3-oxohexanoyl-[ACP] + NADPH + H(+) = (3R)-hydroxyhexanoyl-[ACP] + NADP(+). It catalyses the reaction (3R)-hydroxyhexanoyl-[ACP] = (2E)-hexenoyl-[ACP] + H2O. It carries out the reaction (2E)-hexenoyl-[ACP] + NADPH + H(+) = hexanoyl-[ACP] + NADP(+). The catalysed reaction is hexanoyl-[ACP] + malonyl-[ACP] + H(+) = 3-oxooctanoyl-[ACP] + holo-[ACP] + CO2. The enzyme catalyses 3-oxooctanoyl-[ACP] + NADPH + H(+) = (3R)-hydroxyoctanoyl-[ACP] + NADP(+). It catalyses the reaction (3R)-hydroxyoctanoyl-[ACP] = (2E)-octenoyl-[ACP] + H2O. It carries out the reaction (2E)-octenoyl-[ACP] + NADPH + H(+) = octanoyl-[ACP] + NADP(+). The catalysed reaction is octanoyl-[ACP] + malonyl-[ACP] + H(+) = 3-oxodecanoyl-[ACP] + holo-[ACP] + CO2. The enzyme catalyses 3-oxodecanoyl-[ACP] + NADPH + H(+) = (3R)-hydroxydecanoyl-[ACP] + NADP(+). It catalyses the reaction (3R)-hydroxydecanoyl-[ACP] = (2E)-decenoyl-[ACP] + H2O. It carries out the reaction (2E)-decenoyl-[ACP] + NADPH + H(+) = decanoyl-[ACP] + NADP(+). The catalysed reaction is decanoyl-[ACP] + malonyl-[ACP] + H(+) = 3-oxododecanoyl-[ACP] + holo-[ACP] + CO2. The enzyme catalyses 3-oxododecanoyl-[ACP] + NADPH + H(+) = (3R)-hydroxydodecanoyl-[ACP] + NADP(+). It catalyses the reaction (3R)-hydroxydodecanoyl-[ACP] = (2E)-dodecenoyl-[ACP] + H2O. It carries out the reaction (2E)-dodecenoyl-[ACP] + NADPH + H(+) = dodecanoyl-[ACP] + NADP(+). The catalysed reaction is dodecanoyl-[ACP] + malonyl-[ACP] + H(+) = 3-oxotetradecanoyl-[ACP] + holo-[ACP] + CO2. The enzyme catalyses 3-oxotetradecanoyl-[ACP] + NADPH + H(+) = (3R)-hydroxytetradecanoyl-[ACP] + NADP(+). It catalyses the reaction (3R)-hydroxytetradecanoyl-[ACP] = (2E)-tetradecenoyl-[ACP] + H2O. It carries out the reaction (2E)-tetradecenoyl-[ACP] + NADPH + H(+) = tetradecanoyl-[ACP] + NADP(+). The catalysed reaction is tetradecanoyl-[ACP] + malonyl-[ACP] + H(+) = 3-oxohexadecanoyl-[ACP] + holo-[ACP] + CO2. The enzyme catalyses 3-oxohexadecanoyl-[ACP] + NADPH + H(+) = (3R)-hydroxyhexadecanoyl-[ACP] + NADP(+). It catalyses the reaction (3R)-hydroxyhexadecanoyl-[ACP] = (2E)-hexadecenoyl-[ACP] + H2O. It carries out the reaction (2E)-hexadecenoyl-[ACP] + NADPH + H(+) = hexadecanoyl-[ACP] + NADP(+). The catalysed reaction is hexadecanoyl-[ACP] + malonyl-[ACP] + H(+) = 3-oxooctadecanoyl-[ACP] + holo-[ACP] + CO2. The enzyme catalyses 3-oxooctadecanoyl-[ACP] + NADPH + H(+) = (3R)-hydroxyoctadecanoyl-[ACP] + NADP(+). It catalyses the reaction (3R)-hydroxyoctadecanoyl-[ACP] = (2E)-octadecenoyl-[ACP] + H2O. It carries out the reaction (2E)-octadecenoyl-[ACP] + NADPH + H(+) = octadecanoyl-[ACP] + NADP(+). The catalysed reaction is tetradecanoyl-[ACP] + H2O = tetradecanoate + holo-[ACP] + H(+). The protein operates within lipid metabolism; fatty acid biosynthesis. Its function is as follows. Fatty acid synthetase is a multifunctional enzyme that catalyzes the de novo biosynthesis of long-chain saturated fatty acids starting from acetyl-CoA and malonyl-CoA in the presence of NADPH. This multifunctional protein contains 7 catalytic activities and a site for the binding of the prosthetic group 4'-phosphopantetheine of the acyl carrier protein ([ACP]) domain. The chain is Fatty acid synthase (Fasn) from Mus musculus (Mouse).